The primary structure comprises 384 residues: S-adenosylmethionine synthase (384 aa).

His-15 contributes to the ATP binding site. Asp-17 contributes to the Mg(2+) binding site. Residue Glu-43 coordinates K(+). L-methionine-binding residues include Glu-56 and Gln-99. The segment at 99–109 is flexible loop; it reads QSPDINQGVDR. ATP contacts are provided by residues 164 to 166, 231 to 232, Asp-240, 246 to 247, Ala-263, and Lys-267; these read DAK, RF, and RK. Asp-240 contributes to the L-methionine binding site. Lys-271 is an L-methionine binding site.

This sequence belongs to the AdoMet synthase family. In terms of assembly, homotetramer; dimer of dimers. It depends on Mg(2+) as a cofactor. Requires K(+) as cofactor.

The protein localises to the cytoplasm. It carries out the reaction L-methionine + ATP + H2O = S-adenosyl-L-methionine + phosphate + diphosphate. It functions in the pathway amino-acid biosynthesis; S-adenosyl-L-methionine biosynthesis; S-adenosyl-L-methionine from L-methionine: step 1/1. Catalyzes the formation of S-adenosylmethionine (AdoMet) from methionine and ATP. The overall synthetic reaction is composed of two sequential steps, AdoMet formation and the subsequent tripolyphosphate hydrolysis which occurs prior to release of AdoMet from the enzyme. The polypeptide is S-adenosylmethionine synthase (Shewanella woodyi (strain ATCC 51908 / MS32)).